The chain runs to 315 residues: Rhomboid-related protein 4 (315 aa).

Residues 1–21 (MQRRSRGINTGLILLLSQIFH) lie on the Cytoplasmic side of the membrane. The chain crosses the membrane as a helical span at residues 22–42 (VGINNIPPVTLATLALNIWFF). Residues 43-106 (LNPQKPLYSS…RRLGSRWFAY (64 aa)) are Extracellular-facing. Residues 107-127 (VITAFSVLTGVVYLLLQFAVA) traverse the membrane as a helical segment. At 128 to 138 (EFMDEPDFKRS) the chain is on the cytoplasmic side. The helical transmembrane segment at 139–157 (CAVGFSGVLFALKVLNNHY) threads the bilayer. Ser-144 serves as the catalytic Nucleophile. The Extracellular segment spans residues 158-180 (CPGGFVNILGFPVPNRFACWVEL). Residues 181–201 (VAIHLFSPGTSFAGHLAGILV) traverse the membrane as a helical segment. His-195 is a catalytic residue. Residues 202–315 (GLMYTQGPLK…RQRLHRFDSQ (114 aa)) lie on the Cytoplasmic side of the membrane. The interval 269–284 (SEEEQLERALQASLWD) is ubiquitin-binding domain (UBD). The tract at residues 283–315 (WDRGNTRNSPPPYGFHLSPEEMRRQRLHRFDSQ) is disordered. A compositionally biased stretch (basic and acidic residues) spans 300–315 (SPEEMRRQRLHRFDSQ). A VCP/p97-interacting motif (VIM) region spans residues 301 to 315 (PEEMRRQRLHRFDSQ).

The protein belongs to the peptidase S54 family. In terms of assembly, interacts (via C-terminal domain) with VCP. Interacts with ubiquitin and ubiquitinated proteins. Interacts with BIK and STEAP3. Expressed strongly in testis.

Its subcellular location is the endoplasmic reticulum membrane. The protein resides in the mitochondrion membrane. The catalysed reaction is Cleaves type-1 transmembrane domains using a catalytic dyad composed of serine and histidine that are contributed by different transmembrane domains.. Inhibited by aprotinin. Functionally, intramembrane-cleaving serine protease that cleaves single transmembrane or multi-pass membrane proteins in the hydrophobic plane of the membrane, luminal loops and juxtamembrane regions. Involved in regulated intramembrane proteolysis and the subsequent release of functional polypeptides from their membrane anchors. Functional component of endoplasmic reticulum-associated degradation (ERAD) for misfolded membrane proteins. Required for the degradation process of some specific misfolded endoplasmic reticulum (ER) luminal proteins. Participates in the transfer of misfolded proteins from the ER to the cytosol, where they are destroyed by the proteasome in a ubiquitin-dependent manner. Functions in BIK, MPZ, PKD1, PTCRA, RHO, STEAP3 and TRAC processing. Involved in the regulation of exosomal secretion; inhibits the TSAP6-mediated secretion pathway. Involved in the regulation of apoptosis; modulates BIK-mediated apoptotic activity. Also plays a role in the regulation of spermatogenesis; inhibits apoptotic activity in spermatogonia. This Homo sapiens (Human) protein is Rhomboid-related protein 4 (RHBDD1).